Reading from the N-terminus, the 429-residue chain is Glucose-1-phosphate adenylyltransferase (429 aa).

Alpha-D-glucose 1-phosphate contacts are provided by residues Gly-162, 177–178 (EK), and Ser-209.

Belongs to the bacterial/plant glucose-1-phosphate adenylyltransferase family. Homotetramer.

The catalysed reaction is alpha-D-glucose 1-phosphate + ATP + H(+) = ADP-alpha-D-glucose + diphosphate. Its pathway is glycan biosynthesis; glycogen biosynthesis. In terms of biological role, involved in the biosynthesis of ADP-glucose, a building block required for the elongation reactions to produce glycogen. Catalyzes the reaction between ATP and alpha-D-glucose 1-phosphate (G1P) to produce pyrophosphate and ADP-Glc. The polypeptide is Glucose-1-phosphate adenylyltransferase (Nostoc punctiforme (strain ATCC 29133 / PCC 73102)).